A 420-amino-acid polypeptide reads, in one-letter code: Glycogen synthase kinase-3 beta (420 aa).

The span at 1–22 (MSGRPRTTSFAESCKPVQQPSA) shows a compositional bias: polar residues. Positions 1 to 53 (MSGRPRTTSFAESCKPVQQPSAFGSMKVSRDKDGSKVTTVVATPGQGPDRPQE) are disordered. Ser9 is subject to Phosphoserine; by PKB/AKT1, RPS6KA3 and SGK3. Cys14 is lipidated: S-palmitoyl cysteine. The Protein kinase domain occupies 56 to 340 (YTDTKVIGNG…PLEACAHSFF (285 aa)). ATP-binding positions include 62 to 70 (IGNGSFGVV) and Lys85. Asp181 functions as the Proton acceptor in the catalytic mechanism. Tyr216 bears the Phosphotyrosine mark. The tract at residues 385-420 (QAAASPPANATAASDTNAGDRGQTNNAASASASNST) is disordered. 2 stretches are compositionally biased toward low complexity: residues 386–401 (AAAS…SDTN) and 409–420 (NNAASASASNST). At Ser389 the chain carries Phosphoserine.

This sequence belongs to the protein kinase superfamily. CMGC Ser/Thr protein kinase family. GSK-3 subfamily. As to quaternary structure, monomer. Interacts with DAB2IP (via C2 domain); the interaction stimulates GSK3B kinase activation. Interacts (via C2 domain) with PPP2CA. Interacts with CABYR, MMP2, MUC1, NIN and PRUNE1. Interacts with AXIN1; the interaction mediates hyperphosphorylation of CTNNB1 leading to its ubiquitination and destruction. Interacts with and phosphorylates SNAI1. Interacts with DNM1L (via a C-terminal domain). Interacts with ARRB2. Interacts with DISC1. Found in a complex composed of MACF1, APC, AXIN1, CTNNB1 and GSK3B. Interacts with SGK3. Interacts with the CLOCK-BMAL1 heterodimer. Interacts with ZBED3. Interacts with the BMAL1. The complex composed, at least, of APC, CTNNB1 and GSK3B interacts with JPT1; the interaction requires the inactive form of GSK3B (phosphorylated at 'Ser-9'). Forms a complex composed of PRKAR2A or PRKAR2B, GSK3B and GSKIP through GSKIP interaction; facilitates PKA-induced phosphorylation and regulates GSK3B activity. Interacts with GSKIP. Interacts with GID8. Interacts with PIWIL2. Interacts with LMBR1L. Interacts with DDX3X. Interacts with BIRC2. Interacts with TNFRSF10B; TNFRSF10B stimulation inhibits GSK3B kinase activity. Found in a complex with SLC39A6, SLC39A10 and with GSK3B that controls NCAM1 phosphorylation. Interacts with PKP3 (via ARM repeats); the interaction may be involved in PKP3 protein degradation. Post-translationally, phosphorylated by AKT1 and ILK1. Upon insulin-mediated signaling, the activated PKB/AKT1 protein kinase phosphorylates and deactivates GSK3B, resulting in the dephosphorylation and activation of GYS1. Activated by phosphorylation at Tyr-216. Phosphorylation of Ser-9 in the hippocampus peaks at CT0, whereas in the liver it peaks at CT12. Inactivated by phosphorylation at Ser-9. Phosphorylated in a circadian manner in the hippocampus. Mono-ADP-ribosylation by PARP10 negatively regulates kinase activity. In terms of processing, palmitoylated. Palmitoylation by ZDHHC4 prevents AKT1-mediated phosphorylation. In terms of tissue distribution, expressed in the liver (at protein level).

The protein localises to the cytoplasm. Its subcellular location is the nucleus. The protein resides in the cell membrane. The catalysed reaction is L-seryl-[tau protein] + ATP = O-phospho-L-seryl-[tau protein] + ADP + H(+). It carries out the reaction L-threonyl-[tau protein] + ATP = O-phospho-L-threonyl-[tau protein] + ADP + H(+). The enzyme catalyses L-seryl-[protein] + ATP = O-phospho-L-seryl-[protein] + ADP + H(+). It catalyses the reaction L-threonyl-[protein] + ATP = O-phospho-L-threonyl-[protein] + ADP + H(+). With respect to regulation, activated by phosphorylation at Tyr-216. In response to insulin, inhibited by phosphorylation at Ser-9 by PKB/AKT1 and RPS6KA3; phosphorylation at this site causes a conformational change, preventing access of substrates to the active site. Inhibited by IL22 treatment which also triggers phosphorylation at Ser-9, promoting inactivation. Inhibited by lithium. Its function is as follows. Constitutively active protein kinase that acts as a negative regulator in the hormonal control of glucose homeostasis, Wnt signaling and regulation of transcription factors and microtubules, by phosphorylating and inactivating glycogen synthase (GYS1 or GYS2), EIF2B, CTNNB1/beta-catenin, APC, AXIN1, DPYSL2/CRMP2, JUN, NFATC1/NFATC, MAPT/TAU and MACF1. Requires primed phosphorylation of the majority of its substrates. In skeletal muscle, contributes to insulin regulation of glycogen synthesis by phosphorylating and inhibiting GYS1 activity and hence glycogen synthesis. May also mediate the development of insulin resistance by regulating activation of transcription factors. Regulates protein synthesis by controlling the activity of initiation factor 2B (EIF2BE/EIF2B5) in the same manner as glycogen synthase. In Wnt signaling, GSK3B forms a multimeric complex with APC, AXIN1 and CTNNB1/beta-catenin and phosphorylates the N-terminus of CTNNB1 leading to its degradation mediated by ubiquitin/proteasomes. Phosphorylates JUN at sites proximal to its DNA-binding domain, thereby reducing its affinity for DNA. Phosphorylates NFATC1/NFATC on conserved serine residues promoting NFATC1/NFATC nuclear export, shutting off NFATC1/NFATC gene regulation, and thereby opposing the action of calcineurin. Phosphorylates MAPT/TAU on 'Thr-548', decreasing significantly MAPT/TAU ability to bind and stabilize microtubules. MAPT/TAU is the principal component of neurofibrillary tangles in Alzheimer disease. Plays an important role in ERBB2-dependent stabilization of microtubules at the cell cortex. Phosphorylates MACF1, inhibiting its binding to microtubules which is critical for its role in bulge stem cell migration and skin wound repair. Probably regulates NF-kappa-B (NFKB1) at the transcriptional level and is required for the NF-kappa-B-mediated anti-apoptotic response to TNF-alpha (TNF/TNFA). Negatively regulates replication in pancreatic beta-cells, resulting in apoptosis, loss of beta-cells and diabetes. Through phosphorylation of the anti-apoptotic protein MCL1, may control cell apoptosis in response to growth factors deprivation. Phosphorylates MUC1 in breast cancer cells, decreasing the interaction of MUC1 with CTNNB1/beta-catenin. Is necessary for the establishment of neuronal polarity and axon outgrowth. Phosphorylates MARK2, leading to inhibition of its activity. Phosphorylates SIK1 at 'Thr-182', leading to sustainment of its activity. Phosphorylates ZC3HAV1 which enhances its antiviral activity. Phosphorylates SNAI1, leading to its ubiquitination and proteasomal degradation. Phosphorylates SFPQ at 'Thr-687' upon T-cell activation. Phosphorylates NR1D1 st 'Ser-55' and 'Ser-59' and stabilizes it by protecting it from proteasomal degradation. Regulates the circadian clock via phosphorylation of the major clock components including BMAL1, CLOCK and PER2. Phosphorylates CLOCK AT 'Ser-427' and targets it for proteasomal degradation. Phosphorylates BMAL1 at 'Ser-17' and 'Ser-21' and primes it for ubiquitination and proteasomal degradation. Phosphorylates FBXL2 at 'Thr-404' and primes it for ubiquitination by the SCF(FBXO3) complex and proteasomal degradation. Phosphorylates OGT at 'Ser-3' or 'Ser-4' which positively regulates its activity. Phosphorylates MYCN in neuroblastoma cells which may promote its degradation. Regulates the circadian rhythmicity of hippocampal long-term potentiation and BMAL1 and PER2 expression. Acts as a regulator of autophagy by mediating phosphorylation of KAT5/TIP60 under starvation conditions, activating KAT5/TIP60 acetyltransferase activity and promoting acetylation of key autophagy regulators, such as ULK1 and RUBCNL/Pacer. Negatively regulates extrinsic apoptotic signaling pathway via death domain receptors. Promotes the formation of an anti-apoptotic complex, made of DDX3X, BRIC2 and GSK3B, at death receptors, including TNFRSF10B. The anti-apoptotic function is most effective with weak apoptotic signals and can be overcome by stronger stimulation. Phosphorylates E2F1, promoting the interaction between E2F1 and USP11, stabilizing E2F1 and promoting its activity. Phosphorylates mTORC2 complex component RICTOR at 'Ser-1235' in response to endoplasmic stress, inhibiting mTORC2. Phosphorylates FXR1, promoting FXR1 ubiquitination by the SCF(FBXO4) complex and FXR1 degradation by the proteasome. Phosphorylates interleukin-22 receptor subunit IL22RA1, preventing its proteasomal degradation. This is Glycogen synthase kinase-3 beta from Mus musculus (Mouse).